Here is a 203-residue protein sequence, read N- to C-terminus: Transcriptional regulator GfcR (203 aa).

Belongs to the purine/pyrimidine phosphoribosyltransferase family. GfcR subfamily.

This is Transcriptional regulator GfcR from Methanothrix thermoacetophila (strain DSM 6194 / JCM 14653 / NBRC 101360 / PT) (Methanosaeta thermophila).